The sequence spans 120 residues: ATP-dependent Clp protease adapter protein ClpS (120 aa).

Residues 1 to 20 (MATKSPVNPKVPLVQEPDRD) are disordered.

This sequence belongs to the ClpS family. As to quaternary structure, binds to the N-terminal domain of the chaperone ClpA.

Its function is as follows. Involved in the modulation of the specificity of the ClpAP-mediated ATP-dependent protein degradation. This Albidiferax ferrireducens (strain ATCC BAA-621 / DSM 15236 / T118) (Rhodoferax ferrireducens) protein is ATP-dependent Clp protease adapter protein ClpS.